A 674-amino-acid polypeptide reads, in one-letter code: Probable protein phosphatase 2C 66 (674 aa).

Ser125 is modified (phosphoserine). 2 disordered regions span residues Tyr153–Pro175 and Lys202–Met247. The 422-residue stretch at Lys244–Leu665 folds into the PPM-type phosphatase domain. 2 residues coordinate Mn(2+): Asp282 and Gly283. The span at Asn373–Gln384 shows a compositional bias: basic and acidic residues. The tract at residues Asn373 to Thr392 is disordered. The Mn(2+) site is built by Asp593 and Asp656.

It belongs to the PP2C family. Mg(2+) serves as cofactor. It depends on Mn(2+) as a cofactor. Expressed at low level in seedlings, roots, leaves, stems, young inflorescences, flowers and siliques.

The protein localises to the nucleus. The catalysed reaction is O-phospho-L-seryl-[protein] + H2O = L-seryl-[protein] + phosphate. It carries out the reaction O-phospho-L-threonyl-[protein] + H2O = L-threonyl-[protein] + phosphate. This Arabidopsis thaliana (Mouse-ear cress) protein is Probable protein phosphatase 2C 66 (PLL2).